A 2324-amino-acid polypeptide reads, in one-letter code: Serine/threonine-protein kinase MEC1 (2324 aa).

The FAT domain maps to Val1349–Ser1901. A PI3K/PI4K catalytic domain is found at Phe2005–Ser2308. Positions Val2011–Lys2017 are G-loop. A catalytic loop region spans residues Gly2177–Asn2185. The segment at His2197–Thr2221 is activation loop. An FATC domain is found at Leu2292–Trp2324.

The protein belongs to the PI3/PI4-kinase family. ATM subfamily.

The protein resides in the nucleus. The enzyme catalyses L-seryl-[protein] + ATP = O-phospho-L-seryl-[protein] + ADP + H(+). It catalyses the reaction L-threonyl-[protein] + ATP = O-phospho-L-threonyl-[protein] + ADP + H(+). Serine/threonine protein kinase which activates checkpoint signaling upon genotoxic stresses such as ionizing radiation (IR), ultraviolet light (UV), or DNA replication stalling, thereby acting as a DNA damage sensor. Recognizes the substrate consensus sequence [ST]-Q. Recruited to DNA lesions in order to initiate the DNA repair by homologous recombination. Phosphorylates histone H2A to form H2AS128ph (gamma-H2A) at sites of DNA damage, also involved in the regulation of DNA damage response mechanism. Required for cell growth and meiotic recombination. The sequence is that of Serine/threonine-protein kinase MEC1 (MEC1) from Eremothecium gossypii (strain ATCC 10895 / CBS 109.51 / FGSC 9923 / NRRL Y-1056) (Yeast).